The following is a 93-amino-acid chain: Large ribosomal subunit protein uL23c (93 aa).

The protein belongs to the universal ribosomal protein uL23 family. As to quaternary structure, part of the 50S ribosomal subunit.

The protein resides in the plastid. It is found in the chloroplast. In terms of biological role, binds to 23S rRNA. This Fragaria ananassa (Strawberry) protein is Large ribosomal subunit protein uL23c (rpl23).